A 221-amino-acid polypeptide reads, in one-letter code: GTP cyclohydrolase 1 (221 aa).

3 residues coordinate Zn(2+): cysteine 109, histidine 112, and cysteine 180.

This sequence belongs to the GTP cyclohydrolase I family. Toroid-shaped homodecamer, composed of two pentamers of five dimers.

The catalysed reaction is GTP + H2O = 7,8-dihydroneopterin 3'-triphosphate + formate + H(+). Its pathway is cofactor biosynthesis; 7,8-dihydroneopterin triphosphate biosynthesis; 7,8-dihydroneopterin triphosphate from GTP: step 1/1. The polypeptide is GTP cyclohydrolase 1 (Blochmanniella pennsylvanica (strain BPEN)).